Here is a 171-residue protein sequence, read N- to C-terminus: Adenine phosphoribosyltransferase (171 aa).

The protein belongs to the purine/pyrimidine phosphoribosyltransferase family. As to quaternary structure, homodimer.

It localises to the cytoplasm. It catalyses the reaction AMP + diphosphate = 5-phospho-alpha-D-ribose 1-diphosphate + adenine. It participates in purine metabolism; AMP biosynthesis via salvage pathway; AMP from adenine: step 1/1. Its function is as follows. Catalyzes a salvage reaction resulting in the formation of AMP, that is energically less costly than de novo synthesis. The protein is Adenine phosphoribosyltransferase of Acidiphilium cryptum (strain JF-5).